The chain runs to 521 residues: Ankyrin repeat domain-containing protein 34B (521 aa).

4 ANK repeats span residues 9 to 38 (TESNSLIKAVYQSRLRLTRLLLEGGAYINE), 42 to 79 (RGETPLMIACKTKHVDHQSVSKVKMIKYLLENNADPNI), 83 to 113 (FGKTALMHACLENAGAEVVSLLLESGADPSL), and 117 to 146 (TGFSALVYAVNSEDKETLRILLNACKAKGK). Residues 161–188 (QTTRQYLNVPPSPGIEGNNSPSPCTSPS) form a disordered region. The segment covering 177-188 (GNNSPSPCTSPS) has biased composition (polar residues).

The protein belongs to the ANKRD34 family.

The protein resides in the cytoplasm. It localises to the nucleus. This is Ankyrin repeat domain-containing protein 34B (ankrd34b) from Xenopus laevis (African clawed frog).